We begin with the raw amino-acid sequence, 408 residues long: Tryptophan--tRNA ligase, chloroplastic/mitochondrial (408 aa).

Residues 1-52 constitute a chloroplast and mitochondrion transit peptide; it reads MGHATSLSHFLILSSSRFSRLGSLTRLLSKPTSLSGSFSSISVTGQGFRCCC. Position 53 is an N-acetylserine (serine 53). ATP contacts are provided by residues glutamine 72 and 78 to 81; that span reads HLGN. A 'HIGH' region motif is present at residues 73–81; the sequence is PTGSVHLGN. L-tryptophan is bound at residue aspartate 197. Residues 209 to 211, valine 260, 269 to 273, and lysine 272 each bind ATP; these read GED and KMSKS. Positions 269 to 273 match the 'KMSKS' region motif; it reads KMSKS.

Belongs to the class-I aminoacyl-tRNA synthetase family.

Its subcellular location is the plastid. The protein resides in the chloroplast. It localises to the mitochondrion. The catalysed reaction is tRNA(Trp) + L-tryptophan + ATP = L-tryptophyl-tRNA(Trp) + AMP + diphosphate + H(+). The sequence is that of Tryptophan--tRNA ligase, chloroplastic/mitochondrial from Arabidopsis thaliana (Mouse-ear cress).